Here is a 166-residue protein sequence, read N- to C-terminus: Large ribosomal subunit protein uL10 (166 aa).

This sequence belongs to the universal ribosomal protein uL10 family. Part of the ribosomal stalk of the 50S ribosomal subunit. The N-terminus interacts with L11 and the large rRNA to form the base of the stalk. The C-terminus forms an elongated spine to which L12 dimers bind in a sequential fashion forming a multimeric L10(L12)X complex.

Its function is as follows. Forms part of the ribosomal stalk, playing a central role in the interaction of the ribosome with GTP-bound translation factors. This is Large ribosomal subunit protein uL10 from Staphylococcus epidermidis (strain ATCC 35984 / DSM 28319 / BCRC 17069 / CCUG 31568 / BM 3577 / RP62A).